Consider the following 87-residue polypeptide: Small ribosomal subunit protein bS20 (87 aa).

Positions 1 to 11 (MAHHKSAIKRI) are enriched in basic residues. The tract at residues 1–26 (MAHHKSAIKRIKQNEKRNARNRHQKS) is disordered.

The protein belongs to the bacterial ribosomal protein bS20 family.

In terms of biological role, binds directly to 16S ribosomal RNA. The sequence is that of Small ribosomal subunit protein bS20 from Trichlorobacter lovleyi (strain ATCC BAA-1151 / DSM 17278 / SZ) (Geobacter lovleyi).